The chain runs to 385 residues: Protein pelota homolog (385 aa).

A Glycyl lysine isopeptide (Lys-Gly) (interchain with G-Cter in SUMO2) cross-link involves residue Lys162. Residues Ser374, Ser380, Ser381, and Ser382 each carry the phosphoserine modification.

Belongs to the eukaryotic release factor 1 family. Pelota subfamily. In terms of assembly, component of the Pelota-HBS1L complex, also named Dom34-Hbs1 complex, composed of PELO and HBS1L. Interacts with PINK1. Interacts with ABCE1. Interacts with CNOT4. It depends on a divalent metal cation as a cofactor. Ubiquitously expressed.

Its subcellular location is the cytoplasm. Component of the Pelota-HBS1L complex, a complex that recognizes stalled ribosomes and triggers the No-Go Decay (NGD) pathway. In the Pelota-HBS1L complex, PELO recognizes ribosomes stalled at the 3' end of an mRNA and engages stalled ribosomes by destabilizing mRNA in the mRNA channel. Following mRNA extraction from stalled ribosomes by the SKI complex, the Pelota-HBS1L complex promotes recruitment of ABCE1, which drives the disassembly of stalled ribosomes, followed by degradation of damaged mRNAs as part of the NGD pathway. As part of the PINK1-regulated signaling, upon mitochondrial damage is recruited to the ribosome/mRNA-ribonucleoprotein complex associated to mitochondrial outer membrane thereby enabling the recruitment of autophagy receptors and induction of mitophagy. The sequence is that of Protein pelota homolog from Mus musculus (Mouse).